Here is a 101-residue protein sequence, read N- to C-terminus: Small ribosomal subunit protein uS14A (101 aa).

Residues 31-73 are disordered; that stretch reads IKSPSTTPEARVAAQSELNRQPRDASPVRVRNRDSVDGRPRGH. Over residues 61-70 the composition is skewed to basic and acidic residues; the sequence is RNRDSVDGRP.

It belongs to the universal ribosomal protein uS14 family. Part of the 30S ribosomal subunit. Contacts proteins S3 and S10.

Its function is as follows. Binds 16S rRNA, required for the assembly of 30S particles and may also be responsible for determining the conformation of the 16S rRNA at the A site. This chain is Small ribosomal subunit protein uS14A, found in Mycolicibacterium vanbaalenii (strain DSM 7251 / JCM 13017 / BCRC 16820 / KCTC 9966 / NRRL B-24157 / PYR-1) (Mycobacterium vanbaalenii).